The chain runs to 246 residues: Eukaryotic translation initiation factor 3 subunit K (246 aa).

Residues 1–21 show a composition bias toward low complexity; the sequence is MENDQDQQQQQQQSQQQQPQQ. The segment at 1-30 is disordered; the sequence is MENDQDQQQQQQQSQQQQPQQEEQEQVDVD. The PCI domain occupies 72–235; the sequence is YLFQANSTLL…QKKADTFTFD (164 aa).

The protein belongs to the eIF-3 subunit K family. Component of the eukaryotic translation initiation factor 3 (eIF-3) complex.

Its subcellular location is the cytoplasm. Component of the eukaryotic translation initiation factor 3 (eIF-3) complex, which is involved in protein synthesis of a specialized repertoire of mRNAs and, together with other initiation factors, stimulates binding of mRNA and methionyl-tRNAi to the 40S ribosome. The eIF-3 complex specifically targets and initiates translation of a subset of mRNAs involved in cell proliferation. The polypeptide is Eukaryotic translation initiation factor 3 subunit K (eif3K) (Dictyostelium discoideum (Social amoeba)).